The following is a 112-amino-acid chain: Putative pterin-4-alpha-carbinolamine dehydratase (112 aa).

Belongs to the pterin-4-alpha-carbinolamine dehydratase family.

It catalyses the reaction (4aS,6R)-4a-hydroxy-L-erythro-5,6,7,8-tetrahydrobiopterin = (6R)-L-erythro-6,7-dihydrobiopterin + H2O. The sequence is that of Putative pterin-4-alpha-carbinolamine dehydratase from Shewanella loihica (strain ATCC BAA-1088 / PV-4).